Consider the following 223-residue polypeptide: Kinetochore protein Spc25 (223 aa).

A coiled-coil region spans residues 51–119; that stretch reads RHQRKVGKLQ…NEIMERIQTL (69 aa).

The protein belongs to the SPC25 family. Component of the Ndc80 complex, which is composed of Ndc80, Nuf2 and Spc25.

It localises to the nucleus. The protein localises to the chromosome. The protein resides in the centromere. It is found in the kinetochore. Acts as a component of the essential kinetochore-associated Ndc80 complex, which is required for chromosome segregation and spindle checkpoint activity during meiosis and mitosis. Required for kinetochore integrity and the organization of stable microtubule binding sites in the outer plate of the kinetochore. Participates in SAC signaling that responds specifically to disruptions in spindle microtubule dynamics. The NDC80 complex synergistically enhances the affinity of the SKA1 complex for microtubules and may allow the NDC80 complex to track depolymerizing microtubules. This chain is Kinetochore protein Spc25, found in Drosophila teissieri (Fruit fly).